An 89-amino-acid chain; its full sequence is Large ribosomal subunit protein bL27 (89 aa).

A disordered region spans residues 1-21 (MAHKKAGGSSRNGRDSESKRL).

The protein belongs to the bacterial ribosomal protein bL27 family.

This Chelativorans sp. (strain BNC1) protein is Large ribosomal subunit protein bL27.